Here is an 843-residue protein sequence, read N- to C-terminus: Toll-like receptor 4 (843 aa).

The N-terminal stretch at 1–23 is a signal peptide; the sequence is MMPPTRLAGTLIPAMAFLSCLRP. One can recognise an LRRNT domain in the interval 24-54; it reads ESWDPCVQVVPNTTYQCMDLNLYKIPENIPT. Topologically, residues 24 to 633 are extracellular; the sequence is ESWDPCVQVV…FNNATCQISK (610 aa). Residues Cys29 and Cys40 are joined by a disulfide bond. N-linked (GlcNAc...) asparagine glycosylation occurs at Asn35. LRR repeat units lie at residues 55–76, 79–100, 103–124, 127–148, 151–172, 176–197, 205–225, and 227–247; these read STKE…SFSN, ELQV…AYQG, HLST…AFSG, SLQT…PIGH, TLKE…EYFS, NLEH…DLRV, NLSL…AFKE, and KLHK…KSCI. N-linked (GlcNAc...) asparagine glycans are attached at residues Asn189 and Asn205. N-linked (GlcNAc...) asparagine glycosylation is found at Asn282 and Asn295. 9 LRR repeats span residues 353-374, 375-398, 401-423, 424-445, 449-459, 473-496, 498-519, 522-543, and 546-569; these read SLKR…VKLP, SLEF…ADLK, RLKH…MGLE, QLEH…PVFL, NLRYLDISYTN, SLQV…FREM, NLTT…AFCL, RLRV…PYKP, and SLQI…QHFP. A disulfide bridge connects residues Cys391 and Cys392. 2 N-linked (GlcNAc...) asparagine glycosylation sites follow: Asn498 and Asn527. Residue Asn576 is glycosylated (N-linked (GlcNAc...) asparagine). Positions 580–631 constitute an LRRCT domain; sequence NDFACVCEYQSFLQWVKDQRQLLVEVEHLVCAIPLQMRGMPVLGFNNATCQI. 2 cysteine pairs are disulfide-bonded: Cys584–Cys610 and Cys586–Cys629. An N-linked (GlcNAc...) asparagine glycan is attached at Asn626. The helical transmembrane segment at 634 to 654 threads the bilayer; the sequence is TIVGGSVFSILMVSVIAVLVY. Residues 655–843 lie on the Cytoplasmic side of the membrane; it reads KFYFHLMLLA…SRQHDAETST (189 aa). Residues 674–817 form the TIR domain; it reads SIYDAFVIYS…IFWRRLRKAL (144 aa). The interval 824-843 is disordered; it reads SPAGTADAAESRQHDAETST. Residues 832–843 show a composition bias toward basic and acidic residues; sequence AESRQHDAETST.

Belongs to the Toll-like receptor family. As to quaternary structure, belongs to the lipopolysaccharide (LPS) receptor, a multi-protein complex containing at least CD14, LY96 and TLR4. Binding to bacterial LPS leads to homodimerization. Interacts with LY96 via the extracellular domain. Interacts with MYD88 and TIRAP via their respective TIR domains. Interacts with NOX4. Interacts with CNPY3 and HSP90B1; this interaction is required for proper folding in the endoplasmic reticulum. Interacts with MAP3K21; this interaction leads to negative regulation of TLR4 signaling. Interacts with CD36, following CD36 stimulation by oxLDL or amyloid-beta 42, and forms a heterodimer with TLR6. The trimeric complex is internalized and triggers inflammatory response. LYN kinase activity facilitates TLR4-TLR6 heterodimerization and signal initiation. Interacts with TICAM1 in response to LPS in a WDFY1-dependent manner. Interacts with WDFY1 in response to LPS. Interacts with SMPDL3B. Interacts with CEACAM1; upon lipopolysaccharide stimulation, forms a complex including TLR4 and the phosphorylated form of SYK and CEACAM1, which in turn, recruits PTPN6 that dephosphorylates SYK, reducing the production of reactive oxygen species (ROS) and lysosome disruption, which in turn, reduces the activity of the inflammasome. Interacts with RFTN1; the interaction occurs in response to lipopolysaccharide stimulation. Interacts with SCIMP; the interaction occurs in response to lipopolysaccharide stimulation and is enhanced by phosphorylation of SCIMP by LYN. This interaction facilitates the phosphorylation of TLR4 by LYN which elicits a selective cytokine response in macrophages. Interacts with TRAF3IP3. Interacts with TREM1; this interaction enhances TLR4-mediated inflammatory response. Interacts with ZG16B/PAUF. Interacts with CD82; this interaction inhibits TLR4-mediated signaling pathway. In terms of processing, phosphorylated on tyrosine residues by LYN after binding lipopolysaccharide. Post-translationally, ubiquitinated by RNF128 via 'Lys-28'-linked polyubiquitin chains, leading to proteasomal degradation.

It is found in the cell membrane. Its subcellular location is the early endosome. It localises to the cell projection. The protein resides in the ruffle. Functionally, transmembrane receptor that functions as a pattern recognition receptor recognizing pathogen- and damage-associated molecular patterns (PAMPs and DAMPs) to induce innate immune responses via downstream signaling pathways. At the plasma membrane, cooperates with LY96 to mediate the innate immune response to bacterial lipopolysaccharide (LPS). Also involved in LPS-independent inflammatory responses triggered by free fatty acids, such as palmitate, and Ni(2+). Mechanistically, acts via MYD88, TIRAP and TRAF6, leading to NF-kappa-B activation, cytokine secretion and the inflammatory response. Alternatively, CD14-mediated TLR4 internalization via endocytosis is associated with the initiation of a MYD88-independent signaling via the TICAM1-TBK1-IRF3 axis leading to type I interferon production. In addition to the secretion of proinflammatory cytokines, initiates the activation of NLRP3 inflammasome and formation of a positive feedback loop between autophagy and NF-kappa-B signaling cascade. In complex with TLR6, promotes inflammation in monocytes/macrophages by associating with TLR6 and the receptor CD86. Upon ligand binding, such as oxLDL or amyloid-beta 42, the TLR4:TLR6 complex is internalized and triggers inflammatory response, leading to NF-kappa-B-dependent production of CXCL1, CXCL2 and CCL9 cytokines, via MYD88 signaling pathway, and CCL5 cytokine, via TICAM1 signaling pathway. In myeloid dendritic cells, vesicular stomatitis virus glycoprotein G but not LPS promotes the activation of IRF7, leading to type I IFN production in a CD14-dependent manner. This chain is Toll-like receptor 4 (TLR4), found in Equus caballus (Horse).